Here is a 169-residue protein sequence, read N- to C-terminus: ATP synthase subunit b (169 aa).

A helical transmembrane segment spans residues 12 to 32 (HIYLGNAIWYLLCFAILMLLI).

This sequence belongs to the ATPase B chain family. As to quaternary structure, F-type ATPases have 2 components, F(1) - the catalytic core - and F(0) - the membrane proton channel. F(1) has five subunits: alpha(3), beta(3), gamma(1), delta(1), epsilon(1). F(0) has three main subunits: a(1), b(2) and c(10-14). The alpha and beta chains form an alternating ring which encloses part of the gamma chain. F(1) is attached to F(0) by a central stalk formed by the gamma and epsilon chains, while a peripheral stalk is formed by the delta and b chains.

The protein localises to the cell membrane. Increases 2-fold following exposure to low pH. Its function is as follows. F(1)F(0) ATP synthase produces ATP from ADP in the presence of a proton or sodium gradient. F-type ATPases consist of two structural domains, F(1) containing the extramembraneous catalytic core and F(0) containing the membrane proton channel, linked together by a central stalk and a peripheral stalk. During catalysis, ATP synthesis in the catalytic domain of F(1) is coupled via a rotary mechanism of the central stalk subunits to proton translocation. Component of the F(0) channel, it forms part of the peripheral stalk, linking F(1) to F(0). This Lactobacillus acidophilus (strain ATCC 700396 / NCK56 / N2 / NCFM) protein is ATP synthase subunit b.